An 840-amino-acid chain; its full sequence is Protein translocase subunit SecA (840 aa).

Residues Gln-85, Gly-103–Thr-107, and Asp-492 contribute to the ATP site. A disordered region spans residues Gln-787–Asp-821. Residues Asp-802–Arg-819 are compositionally biased toward basic and acidic residues. The Zn(2+) site is built by Cys-823, Cys-825, Cys-834, and Cys-835.

The protein belongs to the SecA family. Monomer and homodimer. Part of the essential Sec protein translocation apparatus which comprises SecA, SecYEG and auxiliary proteins SecDF. Other proteins may also be involved. Zn(2+) serves as cofactor.

Its subcellular location is the cell membrane. The protein resides in the cytoplasm. The enzyme catalyses ATP + H2O + cellular proteinSide 1 = ADP + phosphate + cellular proteinSide 2.. In terms of biological role, part of the Sec protein translocase complex. Interacts with the SecYEG preprotein conducting channel. Has a central role in coupling the hydrolysis of ATP to the transfer of proteins into and across the cell membrane, serving as an ATP-driven molecular motor driving the stepwise translocation of polypeptide chains across the membrane. This chain is Protein translocase subunit SecA, found in Clostridium perfringens (strain 13 / Type A).